A 416-amino-acid polypeptide reads, in one-letter code: Gamma-glutamyl phosphate reductase (416 aa).

The protein belongs to the gamma-glutamyl phosphate reductase family.

The protein resides in the cytoplasm. The enzyme catalyses L-glutamate 5-semialdehyde + phosphate + NADP(+) = L-glutamyl 5-phosphate + NADPH + H(+). Its pathway is amino-acid biosynthesis; L-proline biosynthesis; L-glutamate 5-semialdehyde from L-glutamate: step 2/2. In terms of biological role, catalyzes the NADPH-dependent reduction of L-glutamate 5-phosphate into L-glutamate 5-semialdehyde and phosphate. The product spontaneously undergoes cyclization to form 1-pyrroline-5-carboxylate. The sequence is that of Gamma-glutamyl phosphate reductase from Glaesserella parasuis serovar 5 (strain SH0165) (Haemophilus parasuis).